Here is a 244-residue protein sequence, read N- to C-terminus: NAD-dependent protein deacetylase (244 aa).

Residues 1–244 enclose the Deacetylase sirtuin-type domain; sequence MSATERQLQY…IGDTCRQLRA (244 aa). NAD(+) is bound by residues A27, T31, F38, R39, Q107, I109, D110, and H125. A nicotinamide-binding site is contributed by F38. I109 and D110 together coordinate nicotinamide. Residue H125 is the Proton acceptor of the active site. Residues C133, C136, C153, and C156 each coordinate Zn(2+). Residues S192, S193, N217, and I235 each contribute to the NAD(+) site.

This sequence belongs to the sirtuin family. Class U subfamily. Zn(2+) serves as cofactor.

Its subcellular location is the cytoplasm. The enzyme catalyses N(6)-acetyl-L-lysyl-[protein] + NAD(+) + H2O = 2''-O-acetyl-ADP-D-ribose + nicotinamide + L-lysyl-[protein]. NAD-dependent protein deacetylase which modulates the activities of several enzymes which are inactive in their acetylated form. In Chromobacterium violaceum (strain ATCC 12472 / DSM 30191 / JCM 1249 / CCUG 213 / NBRC 12614 / NCIMB 9131 / NCTC 9757 / MK), this protein is NAD-dependent protein deacetylase.